We begin with the raw amino-acid sequence, 116 residues long: Aspartate 1-decarboxylase (116 aa).

Ser25 serves as the catalytic Schiff-base intermediate with substrate; via pyruvic acid. Ser25 is modified (pyruvic acid (Ser)). Thr57 provides a ligand contact to substrate. The Proton donor role is filled by Tyr58. Position 73–75 (73–75 (GAA)) interacts with substrate.

Belongs to the PanD family. In terms of assembly, heterooctamer of four alpha and four beta subunits. Requires pyruvate as cofactor. Post-translationally, is synthesized initially as an inactive proenzyme, which is activated by self-cleavage at a specific serine bond to produce a beta-subunit with a hydroxyl group at its C-terminus and an alpha-subunit with a pyruvoyl group at its N-terminus.

Its subcellular location is the cytoplasm. The catalysed reaction is L-aspartate + H(+) = beta-alanine + CO2. It participates in cofactor biosynthesis; (R)-pantothenate biosynthesis; beta-alanine from L-aspartate: step 1/1. In terms of biological role, catalyzes the pyruvoyl-dependent decarboxylation of aspartate to produce beta-alanine. This is Aspartate 1-decarboxylase from Phocaeicola vulgatus (strain ATCC 8482 / DSM 1447 / JCM 5826 / CCUG 4940 / NBRC 14291 / NCTC 11154) (Bacteroides vulgatus).